We begin with the raw amino-acid sequence, 344 residues long: Autoinducer 2 import system permease protein LsrC (344 aa).

Transmembrane regions (helical) follow at residues 13–33, 38–58, 69–89, 90–110, 114–134, 155–175, 212–232, 251–271, and 283–303; these read FFAIVALFVVLVALNPAYFIL, MIFASSQILCLLALGATLVML, TVGLCAIAVGVALNYGYGLAT, AIAFALAIGALAGAFNGLLVV, IPAIVATLGTLGLYRGVMLLW, FIGVSPLGWLVLALLLAGGWL, LNGMLAACAGIVFAAQIGFVP, GISLLGGTGTLLGAFLGAFFL, and LPAWWNDFIAGLVLLGVLVLD. Residues 323–344 are disordered; it reads QPGNKGSKQVARFPERKSKEVA. The span at 335 to 344 shows a compositional bias: basic and acidic residues; sequence FPERKSKEVA.

The protein belongs to the binding-protein-dependent transport system permease family. AraH/RbsC subfamily. As to quaternary structure, the complex is composed of two ATP-binding proteins (LsrA), two transmembrane proteins (LsrC and LsrD) and a solute-binding protein (LsrB).

It localises to the cell inner membrane. In terms of biological role, part of the ABC transporter complex LsrABCD involved in autoinducer 2 (AI-2) import. Probably responsible for the translocation of the substrate across the membrane. This is Autoinducer 2 import system permease protein LsrC (lsrC) from Klebsiella pneumoniae subsp. pneumoniae (strain ATCC 700721 / MGH 78578).